The chain runs to 439 residues: tRNA modification GTPase MnmE (439 aa).

Residues arginine 20, glutamate 78, and lysine 116 each contribute to the (6S)-5-formyl-5,6,7,8-tetrahydrofolate site. The TrmE-type G domain maps to 211–364 (GIYVAILGEP…LLSAIQKKVE (154 aa)). Residues 221–226 (NSGKST), 240–246 (SEYAGTT), and 265–268 (DTAG) each bind GTP. Positions 225 and 246 each coordinate Mg(2+). Lysine 439 is a binding site for (6S)-5-formyl-5,6,7,8-tetrahydrofolate.

The protein belongs to the TRAFAC class TrmE-Era-EngA-EngB-Septin-like GTPase superfamily. TrmE GTPase family. In terms of assembly, homodimer. Heterotetramer of two MnmE and two MnmG subunits. It depends on K(+) as a cofactor.

Its subcellular location is the cytoplasm. In terms of biological role, exhibits a very high intrinsic GTPase hydrolysis rate. Involved in the addition of a carboxymethylaminomethyl (cmnm) group at the wobble position (U34) of certain tRNAs, forming tRNA-cmnm(5)s(2)U34. The sequence is that of tRNA modification GTPase MnmE from Ehrlichia ruminantium (strain Welgevonden).